Here is a 491-residue protein sequence, read N- to C-terminus: Glutamyl-tRNA(Gln) amidotransferase subunit A (491 aa).

Catalysis depends on charge relay system residues lysine 78 and serine 158. The Acyl-ester intermediate role is filled by serine 182.

Belongs to the amidase family. GatA subfamily. As to quaternary structure, heterotrimer of A, B and C subunits.

It catalyses the reaction L-glutamyl-tRNA(Gln) + L-glutamine + ATP + H2O = L-glutaminyl-tRNA(Gln) + L-glutamate + ADP + phosphate + H(+). In terms of biological role, allows the formation of correctly charged Gln-tRNA(Gln) through the transamidation of misacylated Glu-tRNA(Gln) in organisms which lack glutaminyl-tRNA synthetase. The reaction takes place in the presence of glutamine and ATP through an activated gamma-phospho-Glu-tRNA(Gln). The chain is Glutamyl-tRNA(Gln) amidotransferase subunit A from Nitrobacter winogradskyi (strain ATCC 25391 / DSM 10237 / CIP 104748 / NCIMB 11846 / Nb-255).